We begin with the raw amino-acid sequence, 272 residues long: Putative phosphoenolpyruvate synthase regulatory protein (272 aa).

152 to 159 is a binding site for ADP; the sequence is GVSRCGKT.

Belongs to the pyruvate, phosphate/water dikinase regulatory protein family. PSRP subfamily.

The catalysed reaction is [pyruvate, water dikinase] + ADP = [pyruvate, water dikinase]-phosphate + AMP + H(+). It carries out the reaction [pyruvate, water dikinase]-phosphate + phosphate + H(+) = [pyruvate, water dikinase] + diphosphate. In terms of biological role, bifunctional serine/threonine kinase and phosphorylase involved in the regulation of the phosphoenolpyruvate synthase (PEPS) by catalyzing its phosphorylation/dephosphorylation. This is Putative phosphoenolpyruvate synthase regulatory protein from Pseudomonas fluorescens (strain Pf0-1).